The sequence spans 534 residues: Lysophosphatidylcholine acyltransferase 1 (534 aa).

Residues 1 to 22 are disordered; the sequence is MRLRGCGPRAAPASSAGASDAR. The Cytoplasmic portion of the chain corresponds to 1–57; the sequence is MRLRGCGPRAAPASSAGASDARLLAPPGRNPFVHELRLSALQKAQVALMTLTLFPVR. The segment covering 7–22 has biased composition (low complexity); sequence GPRAAPASSAGASDAR. Residues 58-78 traverse the membrane as a helical; Signal-anchor for type II membrane protein segment; the sequence is LLVAAAMMLLAWPLALVASLG. Residues 79 to 534 lie on the Lumenal side of the membrane; it reads SAEKEPEQPP…GRKPVRKKLD (456 aa). An HXXXXD motif motif is present at residues 135–140; it reads HSSYFD. 2 EF-hand domains span residues 379–414 and 451–486; these read PVSDLLEDMFSLFDESGSGEVDLRECVVALSVVCRP and VAELTVTDLFRAIDQEEKGKITFADFHRFAEMYPAF. Asp-392, Ser-394, Ser-396, Glu-398, and Glu-403 together coordinate Ca(2+). A disordered region spans residues 512–534; that stretch reads GFCADFSPENSDAGRKPVRKKLD. Over residues 523–534 the composition is skewed to basic and acidic residues; the sequence is DAGRKPVRKKLD. The Di-lysine motif motif lies at 531 to 534; the sequence is KKLD.

It belongs to the 1-acyl-sn-glycerol-3-phosphate acyltransferase family. In terms of tissue distribution, erythrocytes.

It localises to the endoplasmic reticulum membrane. Its subcellular location is the golgi apparatus membrane. It is found in the cell membrane. The protein localises to the lipid droplet. It catalyses the reaction a 1-acyl-sn-glycero-3-phosphocholine + an acyl-CoA = a 1,2-diacyl-sn-glycero-3-phosphocholine + CoA. The enzyme catalyses a 1-acyl-sn-glycero-3-phosphate + an acyl-CoA = a 1,2-diacyl-sn-glycero-3-phosphate + CoA. It carries out the reaction a 1-O-alkyl-sn-glycero-3-phosphocholine + acetyl-CoA = a 1-O-alkyl-2-acetyl-sn-glycero-3-phosphocholine + CoA. The catalysed reaction is a 1-O-(1Z-alkenyl)-sn-glycero-3-phosphocholine + an acyl-CoA = a 1-O-(1Z-alkenyl)-2-acyl-sn-glycero-3-phosphocholine + CoA. It catalyses the reaction 1-acyl-sn-glycero-3-phospho-(1'-sn-glycerol) + an acyl-CoA = a 1,2-diacyl-sn-glycero-3-phospho-(1'-sn-glycerol) + CoA. The enzyme catalyses 1-hexadecanoyl-sn-glycero-3-phosphocholine + (9Z)-octadecenoyl-CoA = 1-hexadecanoyl-2-(9Z-octadecenoyl)-sn-glycero-3-phosphocholine + CoA. It carries out the reaction 1-hexadecanoyl-sn-glycero-3-phosphocholine + hexadecanoyl-CoA = 1,2-dihexadecanoyl-sn-glycero-3-phosphocholine + CoA. The catalysed reaction is 1-O-hexadecyl-sn-glycero-3-phosphocholine + hexadecanoyl-CoA = 1-O-hexadecyl-2-hexadecanoyl-sn-glycero-3-phosphocholine + CoA. It catalyses the reaction a 1-O-(1Z-alkenyl)-sn-glycero-3-phosphocholine + hexadecanoyl-CoA = 1-O-(1Z)-alkenyl-2-hexadecanoyl-sn-glycero-3-phosphocholine + CoA. The enzyme catalyses 1-hexadecanoyl-sn-glycero-3-phospho-(1'-sn-glycerol) + hexadecanoyl-CoA = 1,2-dihexadecanoyl-sn-glycero-3-phospho-(1'-sn-glycerol) + CoA. It carries out the reaction 1-dodecanoyl-sn-glycero-3-phosphocholine + hexadecanoyl-CoA = 1-dodecanoyl-2-hexadecanoyl-sn-glycero-3-phosphocholine + CoA. The catalysed reaction is 1-tetradecanoyl-sn-glycero-3-phosphocholine + hexadecanoyl-CoA = 1-tetradecanoyl-2-hexadecanoyl-sn-glycero-3-phosphocholine + CoA. It catalyses the reaction 1-O-octadecyl-sn-glycero-3-phosphocholine + hexadecanoyl-CoA = 1-O-octadecyl-2-hexadecanoyl-sn-glycero-3-phosphocholine + CoA. The enzyme catalyses 1-octadecanoyl-sn-glycero-3-phosphocholine + hexadecanoyl-CoA = 1-octadecanoyl-2-hexadecanoyl-sn-glycero-3-phosphocholine + CoA. It carries out the reaction 1-(9Z-octadecenoyl)-sn-glycero-3-phosphocholine + hexadecanoyl-CoA = 1-(9Z-octadecenoyl)-2-hexadecanoyl-sn-glycero-3-phosphocholine + CoA. The catalysed reaction is 1-eicosanoyl-sn-glycero-3-phosphocholine + hexadecanoyl-CoA = 1-eicosanoyl-2-hexadecanoyl-sn-glycero-3-phosphocholine + CoA. It catalyses the reaction hexanoyl-CoA + 1-hexadecanoyl-sn-glycero-3-phosphocholine = 1-hexadecanoyl-2-hexanoyl-sn-glycero-3-phosphocholine + CoA. The enzyme catalyses octanoyl-CoA + 1-hexadecanoyl-sn-glycero-3-phosphocholine = 1-hexadecanoyl-2-octanoyl-sn-glycero-3-phosphocholine + CoA. It carries out the reaction decanoyl-CoA + 1-hexadecanoyl-sn-glycero-3-phosphocholine = 1-hexadecanoyl-2-decanoyl-sn-glycero-3-phosphocholine + CoA. The catalysed reaction is dodecanoyl-CoA + 1-hexadecanoyl-sn-glycero-3-phosphocholine = 1-hexadecanoyl-2-dodecanoyl-sn-glycero-3-phosphocholine + CoA. It catalyses the reaction tetradecanoyl-CoA + 1-hexadecanoyl-sn-glycero-3-phosphocholine = 1-hexadecanoyl-2-tetradecanoyl-sn-glycero-3-phosphocholine + CoA. The enzyme catalyses (9Z,12Z)-octadecadienoyl-CoA + 1-hexadecanoyl-sn-glycero-3-phosphocholine = 1-hexadecanoyl-2-(9Z,12Z-octadecadienoyl)-sn-glycero-3-phosphocholine + CoA. It carries out the reaction (4Z,7Z,10Z,13Z,16Z,19Z)-docosahexaenoyl-CoA + 1-hexadecanoyl-sn-glycero-3-phosphocholine = 1-hexadecanoyl-2-(4Z,7Z,10Z,13Z,16Z,19Z-docosahexaenoyl)-sn-glycero-3-phosphocholine + CoA. The catalysed reaction is 1-hexadecanoyl-sn-glycero-3-phosphocholine + acetyl-CoA = 1-hexadecanoyl-2-acetyl-sn-glycero-3-phosphocholine + CoA. It catalyses the reaction eicosanoyl-CoA + 1-hexadecanoyl-sn-glycero-3-phosphocholine = 1-hexadecanoyl-2-eicosanoyl-sn-glycero-3-phosphocholine + CoA. The enzyme catalyses 1-O-hexadecyl-sn-glycero-3-phosphocholine + acetyl-CoA = 1-O-hexadecyl-2-acetyl-sn-glycero-3-phosphocholine + CoA. It carries out the reaction a 1-acyl-sn-glycero-3-phosphocholine + hexadecanoyl-CoA = 1-acyl-2-hexadecanoyl-sn-glycero-3-phosphocholine + CoA. The catalysed reaction is a 1-acyl-sn-glycero-3-phosphate + hexadecanoyl-CoA = 1-acyl-2-hexadecanoyl-sn-glycero-3-phosphate + CoA. It catalyses the reaction 1-acyl-sn-glycero-3-phospho-(1'-sn-glycerol) + hexadecanoyl-CoA = 1-acyl-2-hexadecanoyl-sn-glycero-3-phospho-(1'-sn-glycerol) + CoA. Its pathway is lipid metabolism; phospholipid metabolism. In terms of biological role, exhibits acyltransferase activity. Exhibits acetyltransferase activity. Activity is calcium-independent. Catalyzes the conversion of lysophosphatidylcholine (1-acyl-sn-glycero-3-phosphocholine or LPC) into phosphatidylcholine (1,2-diacyl-sn-glycero-3-phosphocholine or PC). Catalyzes the conversion 1-acyl-sn-glycerol-3-phosphate (lysophosphatidic acid or LPA) into 1,2-diacyl-sn-glycerol-3-phosphate (phosphatidic acid or PA) by incorporating an acyl moiety at the sn-2 position of the glycerol backbone. Displays a clear preference for saturated fatty acyl-CoAs, and 1-myristoyl or 1-palmitoyl LPC as acyl donors and acceptors, respectively. Involved in platelet-activating factor (PAF) biosynthesis by catalyzing the conversion of the PAF precursor, 1-O-alkyl-sn-glycero-3-phosphocholine (lyso-PAF) into 1-O-alkyl-2-acetyl-sn-glycero-3-phosphocholine (PAF). May synthesize phosphatidylcholine in pulmonary surfactant, thereby playing a pivotal role in respiratory physiology. Involved in the regulation of lipid droplet number and size. The sequence is that of Lysophosphatidylcholine acyltransferase 1 (LPCAT1) from Homo sapiens (Human).